Here is a 190-residue protein sequence, read N- to C-terminus: MSIKSDRWIRRMSEQHGMIEPFEAGQVKQANGERIVSYGTSSYGYDVRCSREFKVFTNINSTIVDPKHFDPGSFVDIVGDECIIPPNSFALARTVEYFRIPRDTLVVCLGKSTYARCGIIVNVTPLEPEWEGHVTLEFSNTTPLPARIYANEGVAQMLFFQAAADDVCETSYRDRGGKYQGQTGVTLPRT.

DCTP contacts are provided by residues 111–116 (KSTYAR), 135–137 (TLE), Gln156, Tyr172, and Gln182. Residue Glu137 is the Proton donor/acceptor of the active site.

The protein belongs to the dCTP deaminase family. As to quaternary structure, homotrimer.

The catalysed reaction is dCTP + H2O + H(+) = dUTP + NH4(+). It participates in pyrimidine metabolism; dUMP biosynthesis; dUMP from dCTP (dUTP route): step 1/2. Functionally, catalyzes the deamination of dCTP to dUTP. This is dCTP deaminase from Stenotrophomonas maltophilia (strain R551-3).